The following is a 299-amino-acid chain: MIKETDLENIPDLLIKFNEPLSNYTYTKVGGPADILAFPATIEALTELSAKAKATDTPVTVLGNASNLIVRDGGIRGLVILLEKLDSVKVAGYTIEAQAGAKLKEVTQVAQANSLTGFEFACGIPGSIGGAVFMNAGAYGGEISQVLVSCKVMDAEGNVSVLSASEMQFGYRHSVIRDKNLIVLSAKFELQAGDPTQIQNEMDRLNFLRESKQPLEYPSCGSVFKRPVGHFAGQLIQEAKLQGQRIGGVEVSKKHAGFMVNVADGNATDYEKLIALVIEKVKENSGVTLEPEVRIIGEK.

The FAD-binding PCMH-type domain maps to 28-193; that stretch reads KVGGPADILA…LSAKFELQAG (166 aa). The active site involves Arg172. Ser222 acts as the Proton donor in catalysis. Glu292 is an active-site residue.

FAD serves as cofactor.

It localises to the cytoplasm. The enzyme catalyses UDP-N-acetyl-alpha-D-muramate + NADP(+) = UDP-N-acetyl-3-O-(1-carboxyvinyl)-alpha-D-glucosamine + NADPH + H(+). The protein operates within cell wall biogenesis; peptidoglycan biosynthesis. Its function is as follows. Cell wall formation. The protein is UDP-N-acetylenolpyruvoylglucosamine reductase of Lactococcus lactis subsp. cremoris (strain MG1363).